The sequence spans 599 residues: DNA primase (599 aa).

Residues 40–64 form a CHC2-type zinc finger; sequence CPFHGENTPSFSVSPDKQLYHCFGC. One can recognise a Toprim domain in the interval 259–342; that stretch reads NEAVLFEGYV…KVAMIPDGLD (84 aa). Mg(2+)-binding residues include Glu-265, Asp-309, and Asp-311.

Belongs to the DnaG primase family. Monomer. Interacts with DnaB. Zn(2+) serves as cofactor. Mg(2+) is required as a cofactor.

It catalyses the reaction ssDNA + n NTP = ssDNA/pppN(pN)n-1 hybrid + (n-1) diphosphate.. Functionally, RNA polymerase that catalyzes the synthesis of short RNA molecules used as primers for DNA polymerase during DNA replication. This chain is DNA primase, found in Halalkalibacterium halodurans (strain ATCC BAA-125 / DSM 18197 / FERM 7344 / JCM 9153 / C-125) (Bacillus halodurans).